The following is a 581-amino-acid chain: Penicillin-binding protein activator LpoA (581 aa).

An N-terminal signal peptide occupies residues 1-26; it reads MLSILMQGLRLKKCFLPILVMFFLAG. Residue cysteine 27 is the site of N-palmitoyl cysteine attachment. Cysteine 27 carries the S-diacylglycerol cysteine lipid modification.

Belongs to the LpoA family. In terms of assembly, interacts with PBP1a.

Its subcellular location is the cell outer membrane. Functionally, regulator of peptidoglycan synthesis that is essential for the function of penicillin-binding protein 1A (PBP1a). This Histophilus somni (strain 129Pt) (Haemophilus somnus) protein is Penicillin-binding protein activator LpoA.